A 311-amino-acid polypeptide reads, in one-letter code: tRNA dimethylallyltransferase (311 aa).

10–17 is a binding site for ATP; it reads GPTASGKT. 12 to 17 lines the substrate pocket; the sequence is TASGKT. Interaction with substrate tRNA regions lie at residues 35-38, 159-163, and 240-245; these read DSAL, QRINR, and RCVGYR.

It belongs to the IPP transferase family. In terms of assembly, monomer. The cofactor is Mg(2+).

The catalysed reaction is adenosine(37) in tRNA + dimethylallyl diphosphate = N(6)-dimethylallyladenosine(37) in tRNA + diphosphate. Its function is as follows. Catalyzes the transfer of a dimethylallyl group onto the adenine at position 37 in tRNAs that read codons beginning with uridine, leading to the formation of N6-(dimethylallyl)adenosine (i(6)A). In Haemophilus influenzae (strain PittEE), this protein is tRNA dimethylallyltransferase.